The chain runs to 807 residues: Glucocorticoid receptor (807 aa).

Disordered stretches follow at residues 1 to 47, 246 to 284, and 412 to 438; these read MDQG…LPSP, TDVN…QHQQ, and FSVS…SKPS. The interval 1–444 is modulating; sequence MDQGGLKRNC…SKPSGPTHKI (444 aa). Positions 257–282 are enriched in basic residues; it reads LQHHQHQQQQHRHLLQHQQHQLHHQH. A compositionally biased stretch (low complexity) spans 412 to 421; sequence FSVSFSSSSP. 2 NR C4-type zinc fingers span residues 445–465 and 490–514; these read CLVC…CGSC and CAGR…FRKC. A DNA-binding region (nuclear receptor) is located at residues 445 to 519; it reads CLVCSDEASG…RFRKCLQAGM (75 aa). Residues 520–553 are hinge; it reads NLEARKNKKLIKMKVHRPTGSAEPISNMPVPVIP. The region spanning 554–788 is the NR LBD domain; sequence RMPQLVPTML…FPEMLAEIIT (235 aa).

Belongs to the nuclear hormone receptor family. NR3 subfamily. Heteromultimeric cytoplasmic complex with HSP90. Upon ligand binding the complex undergoes a conformation change and moves to the nucleus, where it dissociates. Binds to DNA as a homodimer, and as heterodimer with NR3C2. Interaction with numerous other transcription factors modulates transcription activation.

The protein localises to the cytoplasm. Its subcellular location is the nucleus. It localises to the mitochondrion. The protein resides in the cytoskeleton. It is found in the spindle. The protein localises to the microtubule organizing center. Its subcellular location is the centrosome. Functionally, receptor for glucocorticoids (GC). Has a dual mode of action: as a transcription factor that binds to glucocorticoid response elements (GRE), both for nuclear and mitochondrial DNA, and as a modulator of other transcription factors. Affects inflammatory responses, cellular proliferation and differentiation in target tissues. Involved in chromatin remodeling. Plays a role in rapid mRNA degradation by binding to the 5' UTR of target mRNAs and interacting with PNRC2 in a ligand-dependent manner which recruits the RNA helicase UPF1 and the mRNA-decapping enzyme DCP1A, leading to RNA decay. Could act as a coactivator for STAT5-dependent transcription upon growth hormone (GH) stimulation and could reveal an essential role of hepatic GR in the control of body growth. Mediates glucocorticoid-induced apoptosis. Promotes accurate chromosome segregation during mitosis. May act as a tumor suppressor. May play a negative role in adipogenesis through the regulation of lipolytic and antilipogenic gene expression. The protein is Glucocorticoid receptor (nr3c1) of Paralichthys olivaceus (Bastard halibut).